The following is a 273-amino-acid chain: Large ribosomal subunit protein uL2 (273 aa).

2 disordered regions span residues 31 to 50 (APLL…GRIT) and 221 to 273 (RGTA…RRGK). A compositionally biased stretch (basic residues) spans 253-273 (KGKKTRHNKRTDKYIVRRRGK).

It belongs to the universal ribosomal protein uL2 family. As to quaternary structure, part of the 50S ribosomal subunit. Forms a bridge to the 30S subunit in the 70S ribosome.

Its function is as follows. One of the primary rRNA binding proteins. Required for association of the 30S and 50S subunits to form the 70S ribosome, for tRNA binding and peptide bond formation. It has been suggested to have peptidyltransferase activity; this is somewhat controversial. Makes several contacts with the 16S rRNA in the 70S ribosome. This chain is Large ribosomal subunit protein uL2, found in Actinobacillus pleuropneumoniae serotype 7 (strain AP76).